A 336-amino-acid chain; its full sequence is Zinc transporter ZIP11 (336 aa).

7 helical membrane passes run 12 to 32, 44 to 64, 75 to 95, 188 to 208, 258 to 278, 280 to 300, and 316 to 336; these read LLGTLLTWGLTAAGSALVFIF, LGFAAGVMLAASYWSLLAPAI, SFAFVPAAVGFLVGAGFVYLA, IMLLILAITIHNIPEGLAVGV, WYGQLSGMVEPIAGLLGTIAI, LAEPLLPYALAFAAGAMVYVV, and LASWTCIFGFIVMMSLDVGLG.

This sequence belongs to the ZIP transporter (TC 2.A.5) family.

The protein resides in the cell membrane. Its subcellular location is the nucleus. It is found in the cytoplasm. The protein localises to the golgi apparatus. In terms of biological role, functions as a cellular zinc transporter. The sequence is that of Zinc transporter ZIP11 (slc39a11) from Xenopus tropicalis (Western clawed frog).